Reading from the N-terminus, the 355-residue chain is MAEGAVFDAQAVTDAVAEGIAKIENASTMEELKAIKTQYAGAESAMTQASKAIGALPKDQKKDAGKLMGKLRADFGRAFGTKEKQVKAEEEARELAAETVDMTLPVNRKPLGARHPLPKLMEDVEDFFISMGWQISDGPEVETEWYDFDALNFGPDHPARQMQDTFYVKGNQAKDAAGFVGSNMVLRTQTSSDQVRGLITRGVPLYIACPGRVFRTDELDATHTPVFHQVEALAVDKHLTMADLKGVLDKLAVAMFGPEAKTRLRPSYFPFTEPSAELDLWFPDKKGGAGWLEWGGCGMVNPNVLKSAGLDPEVYTGFAFGVGVERTLLLRHDINDMHDLVEGDVRFSEQFVMGE.

A Mg(2+)-binding site is contributed by E273.

This sequence belongs to the class-II aminoacyl-tRNA synthetase family. Phe-tRNA synthetase alpha subunit type 1 subfamily. Tetramer of two alpha and two beta subunits. Requires Mg(2+) as cofactor.

It is found in the cytoplasm. The catalysed reaction is tRNA(Phe) + L-phenylalanine + ATP = L-phenylalanyl-tRNA(Phe) + AMP + diphosphate + H(+). This chain is Phenylalanine--tRNA ligase alpha subunit, found in Bifidobacterium adolescentis (strain ATCC 15703 / DSM 20083 / NCTC 11814 / E194a).